A 305-amino-acid chain; its full sequence is Probable 2-methylisocitrate lyase 1 (305 aa).

52 to 54 provides a ligand contact to substrate; it reads SGA. Residues Asp-91 and Asp-93 each coordinate Mg(2+). Residues 128–129, Arg-163, Glu-193, 216–218, Arg-247, and Arg-276 each bind substrate; these read CG and NMT.

Belongs to the isocitrate lyase/PEP mutase superfamily. Methylisocitrate lyase family. Homotetramer; dimer of dimers. Requires Mg(2+) as cofactor.

The enzyme catalyses (2S,3R)-3-hydroxybutane-1,2,3-tricarboxylate = pyruvate + succinate. Its function is as follows. Catalyzes the thermodynamically favored C-C bond cleavage of (2R,3S)-2-methylisocitrate to yield pyruvate and succinate via an alpha-carboxy-carbanion intermediate. The sequence is that of Probable 2-methylisocitrate lyase 1 from Corynebacterium glutamicum (strain ATCC 13032 / DSM 20300 / JCM 1318 / BCRC 11384 / CCUG 27702 / LMG 3730 / NBRC 12168 / NCIMB 10025 / NRRL B-2784 / 534).